Reading from the N-terminus, the 437-residue chain is MIRFIFKHKKMHKPKELVFGQTIIQLNQVNGADKRKLIWLLIIKRSRQAFPYFQREDAVIYLDNAATTLKPQVLIDRTAEFYASAGSVHRSQYDAAQTVQYEQARTQVKEWVHAEDKHAVIWTSGTTHAINLVANGLMPQLNAEDEILISQADHHANFVTWHETAKKCGAKIQVLPILDNWLIDENALISALSEKTKLVALNFVSNVTGTEQPIKRLIQLIRKHSNALVLVDAAQAISHIKIDLQDLDADFLAFSAHKIYGPNGLGVLTGKLTALSQLQPLFFGGKMVDRVSNDRITFAELPYRLEAGTPNIAGVIGFNAVLDWLQKWDFTAAEQYAISLAESVKVRLKSYENCRLFNSPQASTVVCFVFDGIDCSDLSTLLSEQNIALRVGEHCAQPYLARLGERTTLRLSFAPYNTQEDVEAFFTALDKALDLLQ.

N6-(pyridoxal phosphate)lysine is present on Lys-258.

The protein belongs to the class-V pyridoxal-phosphate-dependent aminotransferase family. Csd subfamily. It depends on pyridoxal 5'-phosphate as a cofactor.

The enzyme catalyses (sulfur carrier)-H + L-cysteine = (sulfur carrier)-SH + L-alanine. In terms of biological role, catalyzes the removal of elemental sulfur and selenium atoms from L-cysteine, L-cystine, L-selenocysteine, and L-selenocystine to produce L-alanine. The chain is Probable cysteine desulfurase (csd) from Haemophilus influenzae (strain ATCC 51907 / DSM 11121 / KW20 / Rd).